The chain runs to 73 residues: Conotoxin Asp7/Gla(3)-TxVI (73 aa).

The first 19 residues, 1-19 (MQKLIILLLVAAVLMSTQA), serve as a signal peptide directing secretion. Positions 20 to 44 (VLQEKRPKEKIKFLSKRKTDAEKQQ) are excised as a propeptide. 3 disulfides stabilise this stretch: cysteine 48/cysteine 62, cysteine 55/cysteine 66, and cysteine 61/cysteine 71. Residues proline 49 and proline 54 each carry the 4-hydroxyproline modification. Glutamate 60 is modified (4-carboxyglutamate). Tryptophan 64 is subject to 6'-bromotryptophan.

As to expression, expressed by the venom duct.

It is found in the secreted. The polypeptide is Conotoxin Asp7/Gla(3)-TxVI (Conus textile (Cloth-of-gold cone)).